We begin with the raw amino-acid sequence, 66 residues long: Large ribosomal subunit protein bL33c (66 aa).

Belongs to the bacterial ribosomal protein bL33 family.

It is found in the plastid. The protein resides in the chloroplast. The sequence is that of Large ribosomal subunit protein bL33c from Aethionema cordifolium (Lebanon stonecress).